A 390-amino-acid polypeptide reads, in one-letter code: Outer membrane protein assembly factor BamB (390 aa).

The N-terminal stretch at methionine 1 to glycine 25 is a signal peptide. Cysteine 26 carries the N-palmitoyl cysteine lipid modification. Cysteine 26 is lipidated: S-diacylglycerol cysteine.

This sequence belongs to the BamB family. In terms of assembly, part of the Bam complex.

Its subcellular location is the cell outer membrane. Its function is as follows. Part of the outer membrane protein assembly complex, which is involved in assembly and insertion of beta-barrel proteins into the outer membrane. This is Outer membrane protein assembly factor BamB from Marinobacter adhaerens (strain DSM 23420 / HP15).